The sequence spans 509 residues: Maturase K (509 aa).

The protein belongs to the intron maturase 2 family. MatK subfamily.

The protein resides in the plastid. The protein localises to the chloroplast. In terms of biological role, usually encoded in the trnK tRNA gene intron. Probably assists in splicing its own and other chloroplast group II introns. The sequence is that of Maturase K from Nymphaea odorata (White water lily).